A 743-amino-acid chain; its full sequence is Phosphoribosylformylglycinamidine synthase subunit PurL (743 aa).

His50 is a catalytic residue. ATP is bound by residues Tyr53 and Lys92. Glu94 contributes to the Mg(2+) binding site. Residues 95–98 (SHNH) and Arg117 each bind substrate. The Proton acceptor role is filled by His96. Position 118 (Asp118) interacts with Mg(2+). Gln241 serves as a coordination point for substrate. Asp269 provides a ligand contact to Mg(2+). 313–315 (ESQ) lines the substrate pocket. Residues Asp494 and Gly531 each coordinate ATP. Mg(2+) is bound at residue Asn532. Residue Ser534 coordinates substrate.

It belongs to the FGAMS family. In terms of assembly, monomer. Part of the FGAM synthase complex composed of 1 PurL, 1 PurQ and 2 PurS subunits.

It is found in the cytoplasm. It catalyses the reaction N(2)-formyl-N(1)-(5-phospho-beta-D-ribosyl)glycinamide + L-glutamine + ATP + H2O = 2-formamido-N(1)-(5-O-phospho-beta-D-ribosyl)acetamidine + L-glutamate + ADP + phosphate + H(+). The protein operates within purine metabolism; IMP biosynthesis via de novo pathway; 5-amino-1-(5-phospho-D-ribosyl)imidazole from N(2)-formyl-N(1)-(5-phospho-D-ribosyl)glycinamide: step 1/2. Its function is as follows. Part of the phosphoribosylformylglycinamidine synthase complex involved in the purines biosynthetic pathway. Catalyzes the ATP-dependent conversion of formylglycinamide ribonucleotide (FGAR) and glutamine to yield formylglycinamidine ribonucleotide (FGAM) and glutamate. The FGAM synthase complex is composed of three subunits. PurQ produces an ammonia molecule by converting glutamine to glutamate. PurL transfers the ammonia molecule to FGAR to form FGAM in an ATP-dependent manner. PurS interacts with PurQ and PurL and is thought to assist in the transfer of the ammonia molecule from PurQ to PurL. The sequence is that of Phosphoribosylformylglycinamidine synthase subunit PurL from Sinorhizobium medicae (strain WSM419) (Ensifer medicae).